A 297-amino-acid polypeptide reads, in one-letter code: Phosphatidylinositol N-acetylglucosaminyltransferase subunit C (297 aa).

4 consecutive transmembrane segments (helical) span residues 67–87 (VFVVIWWYMDEGLLAPQWLFG), 88–108 (TGLASSLVGYVLFDLIDGGDG), 153–173 (SVFMLLGHLIFFDYGANAAIV), and 239–259 (AFGGLLSISGVGAILFALLLF).

This sequence belongs to the PIGC family. In terms of assembly, component of the glycosylphosphatidylinositol-N-acetylglucosaminyltransferase (GPI-GnT) complex composed at least by PIGA, PIGC, PIGH, PIGP, PIGQ, PIGY and DPM2. Interacts with PIGQ. Interacts with the heterodimer PIGA:PIGH.

The protein localises to the endoplasmic reticulum membrane. It participates in glycolipid biosynthesis; glycosylphosphatidylinositol-anchor biosynthesis. Its function is as follows. Part of the glycosylphosphatidylinositol-N-acetylglucosaminyltransferase (GPI-GnT) complex that catalyzes the transfer of N-acetylglucosamine from UDP-N-acetylglucosamine to phosphatidylinositol and participates in the first step of GPI biosynthesis. The chain is Phosphatidylinositol N-acetylglucosaminyltransferase subunit C from Rattus norvegicus (Rat).